We begin with the raw amino-acid sequence, 451 residues long: Phenylalanine--tRNA ligase, mitochondrial (451 aa).

Substrate is bound by residues 157-160, Arg-179, 186-188, and 193-195; these read SAHQ, QHY, and QLE. Lys-202 carries the N6-acetyllysine modification. Substrate-binding residues include Glu-287 and Phe-312. Residues 358–450 enclose the FDX-ACB domain; the sequence is SKYPAVFNDI…AVQLLGVEGR (93 aa).

The protein belongs to the class-II aminoacyl-tRNA synthetase family. Monomer.

The protein resides in the mitochondrion matrix. It localises to the mitochondrion. The catalysed reaction is tRNA(Phe) + L-phenylalanine + ATP = L-phenylalanyl-tRNA(Phe) + AMP + diphosphate + H(+). Its function is as follows. Is responsible for the charging of tRNA(Phe) with phenylalanine in mitochondrial translation. To a lesser extent, also catalyzes direct attachment of m-Tyr (an oxidized version of Phe) to tRNA(Phe), thereby opening the way for delivery of the misacylated tRNA to the ribosome and incorporation of ROS-damaged amino acid into proteins. In Mus musculus (Mouse), this protein is Phenylalanine--tRNA ligase, mitochondrial (Fars2).